A 168-amino-acid chain; its full sequence is ATP synthase subunit b (168 aa).

Residues Leu10–Trp30 form a helical membrane-spanning segment. Residues Glu61–Ala80 are disordered.

This sequence belongs to the ATPase B chain family. In terms of assembly, F-type ATPases have 2 components, F(1) - the catalytic core - and F(0) - the membrane proton channel. F(1) has five subunits: alpha(3), beta(3), gamma(1), delta(1), epsilon(1). F(0) has three main subunits: a(1), b(2) and c(10-14). The alpha and beta chains form an alternating ring which encloses part of the gamma chain. F(1) is attached to F(0) by a central stalk formed by the gamma and epsilon chains, while a peripheral stalk is formed by the delta and b chains.

It localises to the cell membrane. Its function is as follows. F(1)F(0) ATP synthase produces ATP from ADP in the presence of a proton or sodium gradient. F-type ATPases consist of two structural domains, F(1) containing the extramembraneous catalytic core and F(0) containing the membrane proton channel, linked together by a central stalk and a peripheral stalk. During catalysis, ATP synthesis in the catalytic domain of F(1) is coupled via a rotary mechanism of the central stalk subunits to proton translocation. Component of the F(0) channel, it forms part of the peripheral stalk, linking F(1) to F(0). This is ATP synthase subunit b from Limosilactobacillus fermentum (strain NBRC 3956 / LMG 18251) (Lactobacillus fermentum).